A 262-amino-acid chain; its full sequence is Acyl-coenzyme A diphosphatase FITM2 (262 aa).

Over 1-23 the chain is Cytoplasmic; the sequence is MEHLERCEWLLRGTLVRAAVRRY. A helical transmembrane segment spans residues 24 to 44; sequence LPWALVASMLAGSLLKELSPL. The Lumenal segment spans residues 45 to 57; sequence PESYLSNKRNVLN. A helical transmembrane segment spans residues 58–78; it reads VYFVKVAWAWTFCLLLPFIAL. The Cytoplasmic segment spans residues 79–93; that stretch reads TNYHLTGKAGLVLRR. Residues 94–114 traverse the membrane as a helical segment; the sequence is LSTLLVGTAIWYICTSIFSNI. Over 115-145 the chain is Lumenal; it reads EHYTGSCYQSPALEGVRKEHQSKQQCHQEGG. Residues 146-166 form a helical membrane-spanning segment; that stretch reads FWHGFDISGHSFLLTFCALMI. Residue His-155 is part of the active site. Residues 167–190 lie on the Cytoplasmic side of the membrane; it reads VEEMSVLHEVKTDRSHCLHTAITT. A helical membrane pass occupies residues 191 to 211; that stretch reads LVVALGILTFIWVLMFLCTAV. Residues 212 to 218 are Lumenal-facing; sequence YFHNLSQ. The active site involves His-214. The helical transmembrane segment at 219–239 threads the bilayer; that stretch reads KVFGTLFGLLSWYGTYGFWYP. Residues 240 to 262 are Cytoplasmic-facing; that stretch reads KAFSPGLPPQSCSLNLKQDSYKK.

This sequence belongs to the FIT family. FIT2 subfamily. In terms of tissue distribution, widely expressed.

The protein localises to the endoplasmic reticulum membrane. The catalysed reaction is an acyl-CoA + H2O = an acyl-4'-phosphopantetheine + adenosine 3',5'-bisphosphate + 2 H(+). It carries out the reaction (9Z)-octadecenoyl-CoA + H2O = S-(9Z-octadecenoyl)-4'-phosphopantetheine + adenosine 3',5'-bisphosphate + 2 H(+). It catalyses the reaction (5Z,8Z,11Z,14Z)-eicosatetraenoyl-CoA + H2O = S-(5Z,8Z,11Z,14Z-eicosatetraenoyl)-4'-phosphopantetheine + adenosine 3',5'-bisphosphate + 2 H(+). The enzyme catalyses hexadecanoyl-CoA + H2O = S-hexadecanoyl-4'-phosphopantetheine + adenosine 3',5'-bisphosphate + 2 H(+). Functionally, fatty acyl-coenzyme A (CoA) diphosphatase that hydrolyzes fatty acyl-CoA to yield acyl-4'-phosphopantetheine and adenosine 3',5'-bisphosphate. Preferentially hydrolyzes unsaturated long-chain acyl-CoA substrates such as oleoyl-CoA/(9Z)-octadecenoyl-CoA and arachidonoyl-CoA/(5Z,8Z,11Z,14Z)-eicosatetraenoyl-CoA in the endoplasmic reticulum (ER) lumen. This catalytic activity is required for maintaining ER structure and for lipid droplets (LDs) biogenesis, which are lipid storage organelles involved in maintaining lipid and energy homeostasis. Directly binds to diacylglycerol (DAGs) and triacylglycerol, which is also important for LD biogenesis. May support directional budding of nacent LDs from the ER into the cytosol by reducing DAG levels at sites of LD formation. Plays a role in the regulation of cell morphology and cytoskeletal organization. The polypeptide is Acyl-coenzyme A diphosphatase FITM2 (Homo sapiens (Human)).